The following is a 116-amino-acid chain: Large ribosomal subunit protein uL18 (116 aa).

This sequence belongs to the universal ribosomal protein uL18 family. Part of the 50S ribosomal subunit; part of the 5S rRNA/L5/L18/L25 subcomplex. Contacts the 5S and 23S rRNAs.

This is one of the proteins that bind and probably mediate the attachment of the 5S RNA into the large ribosomal subunit, where it forms part of the central protuberance. The protein is Large ribosomal subunit protein uL18 of Cellvibrio japonicus (strain Ueda107) (Pseudomonas fluorescens subsp. cellulosa).